Consider the following 636-residue polypeptide: Threonine--tRNA ligase (636 aa).

The TGS domain maps to 1–61 (MPVITLPDGS…TQDVSLSIIT (61 aa)). Positions 242–533 (DHRKLGKKFD…LIEEYEGAFP (292 aa)) are catalytic. Zn(2+) contacts are provided by C333, H384, and H510.

The protein belongs to the class-II aminoacyl-tRNA synthetase family. As to quaternary structure, homodimer. Zn(2+) is required as a cofactor.

It is found in the cytoplasm. It carries out the reaction tRNA(Thr) + L-threonine + ATP = L-threonyl-tRNA(Thr) + AMP + diphosphate + H(+). Catalyzes the attachment of threonine to tRNA(Thr) in a two-step reaction: L-threonine is first activated by ATP to form Thr-AMP and then transferred to the acceptor end of tRNA(Thr). Also edits incorrectly charged L-seryl-tRNA(Thr). The sequence is that of Threonine--tRNA ligase from Saccharophagus degradans (strain 2-40 / ATCC 43961 / DSM 17024).